A 168-amino-acid polypeptide reads, in one-letter code: I-Kappa-B like protein G2 (168 aa).

ANK repeat units follow at residues 56–88 (SQRQ…DING) and 93–123 (GGNT…NKTA).

It belongs to the polydnaviridae I-Kappa-B-like protein family.

Suppresses the host immune response through NF-kappa-B inactivation. Possesses ankyrin repeat domains required for NF-kappa-B binding but lacks the regulatory regions required for dissociation from NF-kappa-B and degradation. Therefore, prevents host NF-kappa-B release and subsequent activation. This chain is I-Kappa-B like protein G2 (G4), found in Microplitis demolitor (Parasitoid wasp).